A 216-amino-acid polypeptide reads, in one-letter code: 4-hydroxy-tetrahydrodipicolinate reductase (216 aa).

NAD(+)-binding positions include 7 to 12 (GYSGRM), 71 to 73 (GTT), and 95 to 98 (AYNF). Catalysis depends on H127, which acts as the Proton donor/acceptor. H128 provides a ligand contact to (S)-2,3,4,5-tetrahydrodipicolinate. The active-site Proton donor is the K131. 137 to 138 (GT) contacts (S)-2,3,4,5-tetrahydrodipicolinate.

Belongs to the DapB family.

Its subcellular location is the cytoplasm. The catalysed reaction is (S)-2,3,4,5-tetrahydrodipicolinate + NAD(+) + H2O = (2S,4S)-4-hydroxy-2,3,4,5-tetrahydrodipicolinate + NADH + H(+). It carries out the reaction (S)-2,3,4,5-tetrahydrodipicolinate + NADP(+) + H2O = (2S,4S)-4-hydroxy-2,3,4,5-tetrahydrodipicolinate + NADPH + H(+). It functions in the pathway amino-acid biosynthesis; L-lysine biosynthesis via DAP pathway; (S)-tetrahydrodipicolinate from L-aspartate: step 4/4. Functionally, catalyzes the conversion of 4-hydroxy-tetrahydrodipicolinate (HTPA) to tetrahydrodipicolinate. This Thermotoga sp. (strain RQ2) protein is 4-hydroxy-tetrahydrodipicolinate reductase.